Reading from the N-terminus, the 877-residue chain is DNA polymerase I (877 aa).

In terms of domain architecture, 5'-3' exonuclease spans 177-270; that stretch reads TPAQFIDLKA…LEDLVYSGPD (94 aa). Residues 302-465 form the 3'-5' exonuclease domain; the sequence is DFTIVDQISQ…TEPILLEKLS (164 aa).

It belongs to the DNA polymerase type-A family. As to quaternary structure, single-chain monomer with multiple functions.

It catalyses the reaction DNA(n) + a 2'-deoxyribonucleoside 5'-triphosphate = DNA(n+1) + diphosphate. In addition to polymerase activity, this DNA polymerase exhibits 3'-5' and 5'-3' exonuclease activity. This is DNA polymerase I (polA) from Streptococcus pneumoniae serotype 4 (strain ATCC BAA-334 / TIGR4).